Reading from the N-terminus, the 187-residue chain is Peptidyl-tRNA hydrolase (187 aa).

Position 14 (H14) interacts with tRNA. H19 (proton acceptor) is an active-site residue. TRNA is bound by residues Y62, N64, and N110.

It belongs to the PTH family. As to quaternary structure, monomer.

The protein resides in the cytoplasm. It carries out the reaction an N-acyl-L-alpha-aminoacyl-tRNA + H2O = an N-acyl-L-amino acid + a tRNA + H(+). Hydrolyzes ribosome-free peptidyl-tRNAs (with 1 or more amino acids incorporated), which drop off the ribosome during protein synthesis, or as a result of ribosome stalling. In terms of biological role, catalyzes the release of premature peptidyl moieties from peptidyl-tRNA molecules trapped in stalled 50S ribosomal subunits, and thus maintains levels of free tRNAs and 50S ribosomes. This Chlorobaculum tepidum (strain ATCC 49652 / DSM 12025 / NBRC 103806 / TLS) (Chlorobium tepidum) protein is Peptidyl-tRNA hydrolase.